The sequence spans 358 residues: Ganglioside-induced differentiation-associated protein 1 (358 aa).

The region spanning 24-105 is the GST N-terminal domain; it reads VKLILYHWTH…YLEQTFLDER (82 aa). Residues lysine 50, lysine 172, lysine 173, lysine 188, and lysine 190 each participate in a glycyl lysine isopeptide (Lys-Gly) (interchain with G-Cter in ubiquitin) cross-link. Residues 153–309 enclose the GST C-terminal domain; the sequence is PAYATTRIRS…LISAVLPTAF (157 aa). N6-acetyllysine; alternate is present on lysine 203. A Glycyl lysine isopeptide (Lys-Gly) (interchain with G-Cter in ubiquitin); alternate cross-link involves residue lysine 203. Residues lysine 206, lysine 207, and lysine 214 each participate in a glycyl lysine isopeptide (Lys-Gly) (interchain with G-Cter in ubiquitin) cross-link. A run of 2 helical transmembrane segments spans residues 292–312 and 320–340; these read VLGH…FRVA and LGTT…FMLF. Residues 320–358 form a required for mitochondrial localization region; that stretch reads LGTTLVVGLLAGVGYFAFMLFRKRLGSMILAFRPRPNYF.

It belongs to the GST superfamily. In terms of assembly, homodimer. Ubiquitinated by PRKN during mitophagy, leading to its degradation and enhancement of mitophagy. Deubiquitinated by USP30. In terms of tissue distribution, highly expressed in whole brain and spinal cord. Predominant expression in central tissues of the nervous system not only in neurons but also in Schwann cells.

It localises to the mitochondrion outer membrane. The protein resides in the cytoplasm. Its function is as follows. Regulates the mitochondrial network by promoting mitochondrial fission. The polypeptide is Ganglioside-induced differentiation-associated protein 1 (GDAP1) (Homo sapiens (Human)).